A 183-amino-acid polypeptide reads, in one-letter code: Threonylcarbamoyl-AMP synthase (183 aa).

In terms of domain architecture, YrdC-like spans 1–183; that stretch reads MELAQIVERL…IFSRQIFRRG (183 aa).

The protein belongs to the SUA5 family. TsaC subfamily.

Its subcellular location is the cytoplasm. The enzyme catalyses L-threonine + hydrogencarbonate + ATP = L-threonylcarbamoyladenylate + diphosphate + H2O. In terms of biological role, required for the formation of a threonylcarbamoyl group on adenosine at position 37 (t(6)A37) in tRNAs that read codons beginning with adenine. Catalyzes the conversion of L-threonine, HCO(3)(-)/CO(2) and ATP to give threonylcarbamoyl-AMP (TC-AMP) as the acyladenylate intermediate, with the release of diphosphate. In Mannheimia succiniciproducens (strain KCTC 0769BP / MBEL55E), this protein is Threonylcarbamoyl-AMP synthase.